The sequence spans 529 residues: Peptide chain release factor 3 (529 aa).

A tr-type G domain is found at 11 to 280; sequence AKRRTFAIIS…GLVAWAPAPM (270 aa). Residues 20-27, 88-92, and 142-145 each bind GTP; these read SHPDAGKT, DTPGH, and NKLD.

It belongs to the TRAFAC class translation factor GTPase superfamily. Classic translation factor GTPase family. PrfC subfamily.

The protein localises to the cytoplasm. Its function is as follows. Increases the formation of ribosomal termination complexes and stimulates activities of RF-1 and RF-2. It binds guanine nucleotides and has strong preference for UGA stop codons. It may interact directly with the ribosome. The stimulation of RF-1 and RF-2 is significantly reduced by GTP and GDP, but not by GMP. In Edwardsiella ictaluri (strain 93-146), this protein is Peptide chain release factor 3.